We begin with the raw amino-acid sequence, 242 residues long: DNA repair protein RecO (242 aa).

The protein belongs to the RecO family. As to quaternary structure, monomer.

Its function is as follows. Involved in DNA repair and RecF pathway recombination. The chain is DNA repair protein RecO from Salmonella agona (strain SL483).